A 548-amino-acid chain; its full sequence is uncharacterized protein (548 aa).

The first 24 residues, 1-24 (MKKATKLLLSILPISSISFLSVVS), serve as a signal peptide directing secretion. Cys25 carries N-palmitoyl cysteine lipidation. Cys25 carries the S-diacylglycerol cysteine lipid modification. A disordered region spans residues 26–129 (STRNSNAKQP…NNQHADQPNI (104 aa)). Residues 34 to 44 (QPDKKPEKPNE) are compositionally biased toward basic and acidic residues. The span at 58-78 (PTNNNNNSNNNSNSNNNKPGS) shows a compositional bias: low complexity. Over residues 83–109 (ENKDPSKSEETPEKPERDPKKPDKQPQ) the composition is skewed to basic and acidic residues. The span at 110-128 (GDDPNNHQPHNNQHADQPN) shows a compositional bias: low complexity.

Belongs to the mycoplasma p72 lipoprotein family.

The protein localises to the cell membrane. This is an uncharacterized protein from Mycoplasma mycoides subsp. mycoides SC (strain CCUG 32753 / NCTC 10114 / PG1).